The primary structure comprises 237 residues: Protein FEV (237 aa).

Positions 47 to 127 form a DNA-binding region, ETS; that stretch reads IQLWQFLLEL…HGKRYAYRFD (81 aa). The may mediate active transcriptional repression stretch occupies residues 129–237; sequence QGLAQACQPP…AASHLGGHYH (109 aa).

It belongs to the ETS family. As to expression, expressed in central serotonergic neurons.

It localises to the nucleus. Its function is as follows. Functions as a transcriptional regulator. May function as a transcriptional repressor. Functions in the differentiation and the maintenance of the central serotonergic neurons. May play a role in cell growth. The polypeptide is Protein FEV (Fev) (Mus musculus (Mouse)).